Here is a 128-residue protein sequence, read N- to C-terminus: Large ribosomal subunit protein bL20 (128 aa).

This sequence belongs to the bacterial ribosomal protein bL20 family.

In terms of biological role, binds directly to 23S ribosomal RNA and is necessary for the in vitro assembly process of the 50S ribosomal subunit. It is not involved in the protein synthesizing functions of that subunit. The polypeptide is Large ribosomal subunit protein bL20 (Kocuria rhizophila (strain ATCC 9341 / DSM 348 / NBRC 103217 / DC2201)).